A 462-amino-acid chain; its full sequence is Glycine--tRNA ligase (462 aa).

Residues Arg100 and Glu170 each coordinate substrate. ATP contacts are provided by residues 202 to 204, 212 to 217, 287 to 288, and 331 to 334; these read RNE, FRTREF, EL, and GVER. A substrate-binding site is contributed by 217-221; the sequence is FEQME. 327 to 331 lines the substrate pocket; sequence EPSVG.

It belongs to the class-II aminoacyl-tRNA synthetase family. As to quaternary structure, homodimer.

It localises to the cytoplasm. It catalyses the reaction tRNA(Gly) + glycine + ATP = glycyl-tRNA(Gly) + AMP + diphosphate. Its function is as follows. Catalyzes the attachment of glycine to tRNA(Gly). This Malacoplasma penetrans (strain HF-2) (Mycoplasma penetrans) protein is Glycine--tRNA ligase.